Here is a 136-residue protein sequence, read N- to C-terminus: Large-conductance mechanosensitive channel (136 aa).

Over 1 to 16 the chain is Cytoplasmic; that stretch reads MGLLSEFKAFAVKGNV. The chain crosses the membrane as a helical span at residues 17–45; sequence VDMAVGIIIGAAFGKIVSSFVGDVIMPPI. At 46-73 the chain is on the extracellular side; sequence GLLIGGVDFSDLAITLKAEGDVPAVVLA. A helical transmembrane segment spans residues 74–93; sequence YRKFIQTVLNFVIVAFAIFM. At 94 to 136 the chain is on the cytoplasmic side; the sequence is GVKAINRLKREEAVAPSEPPVPSAEETLLTEIRDLLKAQQNKS.

It belongs to the MscL family. As to quaternary structure, homopentamer.

The protein resides in the cell inner membrane. In terms of biological role, channel that opens in response to stretch forces in the membrane lipid bilayer. Forms a nonselective ion channel with a conductance of about 4 nanosiemens. May participate in the regulation of osmotic pressure changes within the cell. The chain is Large-conductance mechanosensitive channel from Pseudomonas fluorescens.